Consider the following 187-residue polypeptide: Probable chorismate pyruvate-lyase (187 aa).

Substrate-binding residues include Arg76, Leu114, and Glu173.

This sequence belongs to the UbiC family.

The protein resides in the cytoplasm. The catalysed reaction is chorismate = 4-hydroxybenzoate + pyruvate. Its pathway is cofactor biosynthesis; ubiquinone biosynthesis. Functionally, removes the pyruvyl group from chorismate, with concomitant aromatization of the ring, to provide 4-hydroxybenzoate (4HB) for the ubiquinone pathway. In Shewanella amazonensis (strain ATCC BAA-1098 / SB2B), this protein is Probable chorismate pyruvate-lyase.